The following is a 342-amino-acid chain: L-threonine 3-dehydrogenase (342 aa).

C38 contacts Zn(2+). Residues T40 and H43 each act as charge relay system in the active site. Positions 63, 64, 93, 96, 99, and 107 each coordinate Zn(2+). Residues I175, D195, R200, 262–264, and 286–287 contribute to the NAD(+) site; these read LGI and IY.

Belongs to the zinc-containing alcohol dehydrogenase family. In terms of assembly, homotetramer. Zn(2+) serves as cofactor.

It localises to the cytoplasm. The enzyme catalyses L-threonine + NAD(+) = (2S)-2-amino-3-oxobutanoate + NADH + H(+). Its pathway is amino-acid degradation; L-threonine degradation via oxydo-reductase pathway; glycine from L-threonine: step 1/2. Its function is as follows. Catalyzes the NAD(+)-dependent oxidation of L-threonine to 2-amino-3-ketobutyrate. The polypeptide is L-threonine 3-dehydrogenase (Burkholderia cenocepacia (strain HI2424)).